The sequence spans 450 residues: Glucose-6-phosphate isomerase (450 aa).

The active-site Proton donor is Glu-291. Residues His-312 and Lys-426 contribute to the active site.

It belongs to the GPI family.

It is found in the cytoplasm. It carries out the reaction alpha-D-glucose 6-phosphate = beta-D-fructose 6-phosphate. Its pathway is carbohydrate biosynthesis; gluconeogenesis. The protein operates within carbohydrate degradation; glycolysis; D-glyceraldehyde 3-phosphate and glycerone phosphate from D-glucose: step 2/4. Catalyzes the reversible isomerization of glucose-6-phosphate to fructose-6-phosphate. The chain is Glucose-6-phosphate isomerase from Clostridium botulinum (strain Hall / ATCC 3502 / NCTC 13319 / Type A).